Consider the following 223-residue polypeptide: MKRN2 opposite strand protein (223 aa).

The protein is MKRN2 opposite strand protein (MKRN2OS) of Homo sapiens (Human).